Reading from the N-terminus, the 152-residue chain is Large ribosomal subunit protein uL15 (152 aa).

The protein belongs to the universal ribosomal protein uL15 family. Part of the 50S ribosomal subunit.

Binds to the 23S rRNA. The polypeptide is Large ribosomal subunit protein uL15 (Staphylothermus marinus (strain ATCC 43588 / DSM 3639 / JCM 9404 / F1)).